Here is a 1413-residue protein sequence, read N- to C-terminus: DNA-directed RNA polymerase subunit beta' (1413 aa).

Zn(2+)-binding residues include cysteine 70, cysteine 72, cysteine 85, and cysteine 88. Residues aspartate 460, aspartate 462, and aspartate 464 each coordinate Mg(2+). Zn(2+)-binding residues include cysteine 819, cysteine 893, cysteine 900, and cysteine 903. Residues 1392–1413 (EEAFDFGTPSAPAEEPQHPAAE) form a disordered region.

It belongs to the RNA polymerase beta' chain family. In terms of assembly, the RNAP catalytic core consists of 2 alpha, 1 beta, 1 beta' and 1 omega subunit. When a sigma factor is associated with the core the holoenzyme is formed, which can initiate transcription. Requires Mg(2+) as cofactor. It depends on Zn(2+) as a cofactor.

It carries out the reaction RNA(n) + a ribonucleoside 5'-triphosphate = RNA(n+1) + diphosphate. DNA-dependent RNA polymerase catalyzes the transcription of DNA into RNA using the four ribonucleoside triphosphates as substrates. This Burkholderia orbicola (strain MC0-3) protein is DNA-directed RNA polymerase subunit beta'.